We begin with the raw amino-acid sequence, 581 residues long: Pyridine nucleotide-disulfide oxidoreductase domain-containing protein 2 (581 aa).

38 to 71 (VVIGAGHNGLVAAAYLQRLGVNTAVFERRHVIGG) lines the FAD pocket.

This sequence belongs to the carotenoid/retinoid oxidoreductase family. In terms of assembly, interacts with COX5B; this interaction may contribute to localize PYROXD2 to the inner face of the inner mitochondrial membrane.

It localises to the mitochondrion matrix. Its function is as follows. Probable oxidoreductase that may play a role as regulator of mitochondrial function. The protein is Pyridine nucleotide-disulfide oxidoreductase domain-containing protein 2 of Homo sapiens (Human).